We begin with the raw amino-acid sequence, 386 residues long: Succinate--CoA ligase [ADP-forming] subunit beta (386 aa).

Residues Lys-9–Arg-244 enclose the ATP-grasp domain. Residues Lys-46, Gly-53 to Gly-55, Glu-99, Cys-102, and Glu-107 each bind ATP. The Mg(2+) site is built by Asn-199 and Asp-213. Residues Asn-264 and Gly-321–Met-323 each bind substrate.

The protein belongs to the succinate/malate CoA ligase beta subunit family. In terms of assembly, heterotetramer of two alpha and two beta subunits. Requires Mg(2+) as cofactor.

The enzyme catalyses succinate + ATP + CoA = succinyl-CoA + ADP + phosphate. It catalyses the reaction GTP + succinate + CoA = succinyl-CoA + GDP + phosphate. The protein operates within carbohydrate metabolism; tricarboxylic acid cycle; succinate from succinyl-CoA (ligase route): step 1/1. Its function is as follows. Succinyl-CoA synthetase functions in the citric acid cycle (TCA), coupling the hydrolysis of succinyl-CoA to the synthesis of either ATP or GTP and thus represents the only step of substrate-level phosphorylation in the TCA. The beta subunit provides nucleotide specificity of the enzyme and binds the substrate succinate, while the binding sites for coenzyme A and phosphate are found in the alpha subunit. The chain is Succinate--CoA ligase [ADP-forming] subunit beta from Rickettsia typhi (strain ATCC VR-144 / Wilmington).